A 675-amino-acid chain; its full sequence is PTS system glucose-specific EIICBA component (675 aa).

A PTS EIIC type-1 domain is found at 3-414 (KKLFGQLQRI…FNFKTPGRED (412 aa)). 11 helical membrane passes run 16-36 (LMLP…GTAF), 59-79 (MMTG…ALGV), 81-101 (IGLA…FIIM), 126-146 (VLGI…GALA), 173-193 (IMMA…WPFI), 199-219 (AFST…FGFI), 273-293 (FMQG…LAIY), 303-323 (VVGG…ITEP), 328-348 (FLFV…LSFL), 355-375 (LHLG…GILP), and 378-398 (TPWW…YVVF). Residues 425 to 506 (SKLPFDVLDA…ARIMNGDITK (82 aa)) enclose the PTS EIIB type-1 domain. The active-site Phosphocysteine intermediate; for EIIB activity is C447. The PTS EIIA type-1 domain maps to 547 to 651 (DKVFSEKMMG…SVVTPVIITN (105 aa)). The active-site Tele-phosphohistidine intermediate; for EIIA activity is H599.

The protein localises to the cell membrane. The catalysed reaction is N(pros)-phospho-L-histidyl-[protein] + D-glucose(out) = D-glucose 6-phosphate(in) + L-histidyl-[protein]. Functionally, the phosphoenolpyruvate-dependent sugar phosphotransferase system (sugar PTS), a major carbohydrate active transport system, catalyzes the phosphorylation of incoming sugar substrates concomitantly with their translocation across the cell membrane. This system is involved in glucose transport. This Staphylococcus haemolyticus (strain JCSC1435) protein is PTS system glucose-specific EIICBA component (ptsG).